Here is a 247-residue protein sequence, read N- to C-terminus: DNA polymerase sliding clamp (247 aa).

The protein belongs to the PCNA family. As to quaternary structure, homotrimer. The subunits circularize to form a toroid; DNA passes through its center. Replication factor C (RFC) is required to load the toroid on the DNA.

Functionally, sliding clamp subunit that acts as a moving platform for DNA processing. Responsible for tethering the catalytic subunit of DNA polymerase and other proteins to DNA during high-speed replication. This chain is DNA polymerase sliding clamp, found in Methanoculleus marisnigri (strain ATCC 35101 / DSM 1498 / JR1).